The following is a 91-amino-acid chain: Small ribosomal subunit protein uS15 (91 aa).

It belongs to the universal ribosomal protein uS15 family. Part of the 30S ribosomal subunit. Forms a bridge to the 50S subunit in the 70S ribosome, contacting the 23S rRNA.

In terms of biological role, one of the primary rRNA binding proteins, it binds directly to 16S rRNA where it helps nucleate assembly of the platform of the 30S subunit by binding and bridging several RNA helices of the 16S rRNA. Functionally, forms an intersubunit bridge (bridge B4) with the 23S rRNA of the 50S subunit in the ribosome. The chain is Small ribosomal subunit protein uS15 from Rickettsia canadensis (strain McKiel).